Consider the following 305-residue polypeptide: Mitochondrial distribution and morphology protein 12 (305 aa).

An SMP-LTD domain is found at 1–236 (MSVEIDWDNI…WPSWIDLDFT (236 aa)). Residues 233 to 305 (LDFTPEDPED…RVNSNTSLEE (73 aa)) form a disordered region. Residues 235–248 (FTPEDPEDPEEEGR) show a composition bias toward acidic residues. Residues 258–269 (NDGKDIEMKSGT) are compositionally biased toward basic and acidic residues. Residues 279–305 (ESVQHVSPAVTSIDQESRVNSNTSLEE) show a composition bias toward polar residues.

This sequence belongs to the MDM12 family. In terms of assembly, component of the ER-mitochondria encounter structure (ERMES) or MDM complex, composed of MMM1, MDM10, MDM12 and MDM34. An MMM1 homodimer associates with one molecule of MDM12 on each side in a pairwise head-to-tail manner, and the SMP-LTD domains of MMM1 and MDM12 generate a continuous hydrophobic tunnel for phospholipid trafficking.

It is found in the mitochondrion outer membrane. It localises to the endoplasmic reticulum membrane. Component of the ERMES/MDM complex, which serves as a molecular tether to connect the endoplasmic reticulum (ER) and mitochondria. Components of this complex are involved in the control of mitochondrial shape and protein biogenesis, and function in nonvesicular lipid trafficking between the ER and mitochondria. MDM12 is required for the interaction of the ER-resident membrane protein MMM1 and the outer mitochondrial membrane-resident beta-barrel protein MDM10. The MDM12-MMM1 subcomplex functions in the major beta-barrel assembly pathway that is responsible for biogenesis of all mitochondrial outer membrane beta-barrel proteins, and acts in a late step after the SAM complex. The MDM10-MDM12-MMM1 subcomplex further acts in the TOM40-specific pathway after the action of the MDM12-MMM1 complex. Essential for establishing and maintaining the structure of mitochondria and maintenance of mtDNA nucleoids. The protein is Mitochondrial distribution and morphology protein 12 of Kluyveromyces lactis (strain ATCC 8585 / CBS 2359 / DSM 70799 / NBRC 1267 / NRRL Y-1140 / WM37) (Yeast).